Here is a 482-residue protein sequence, read N- to C-terminus: Cardiolipin synthase (482 aa).

The next 2 membrane-spanning stretches (helical) occupy residues 4 to 24 (LAYL…VTVF) and 34 to 54 (WAWL…YLIF). 2 consecutive PLD phosphodiesterase domains span residues 217–244 (LNYR…GDEY) and 395–422 (DNGF…DFRS). Residues His222, Lys224, Asp229, His400, Lys402, and Asp407 contribute to the active site.

Belongs to the phospholipase D family. Cardiolipin synthase subfamily.

The protein localises to the cell membrane. The catalysed reaction is 2 a 1,2-diacyl-sn-glycero-3-phospho-(1'-sn-glycerol) = a cardiolipin + glycerol. Functionally, catalyzes the reversible phosphatidyl group transfer from one phosphatidylglycerol molecule to another to form cardiolipin (CL) (diphosphatidylglycerol) and glycerol. The sequence is that of Cardiolipin synthase (cls) from Listeria monocytogenes serotype 4b (strain CLIP80459).